The chain runs to 182 residues: Large ribosomal subunit protein uL6 (182 aa).

It belongs to the universal ribosomal protein uL6 family. As to quaternary structure, part of the 50S ribosomal subunit.

This protein binds to the 23S rRNA, and is important in its secondary structure. It is located near the subunit interface in the base of the L7/L12 stalk, and near the tRNA binding site of the peptidyltransferase center. The sequence is that of Large ribosomal subunit protein uL6 from Caldicellulosiruptor saccharolyticus (strain ATCC 43494 / DSM 8903 / Tp8T 6331).